We begin with the raw amino-acid sequence, 204 residues long: MNAELELLWPLSGLLLLLLLGTTAWLCVQCSRPGVKRNEKIYEQRNQQENEQSVASSQTYSLARPVRTGLQMDAASNKSFERKNKLLFSHLEGPESPRYQNFYKGSRRESDAAYVDPIPTDYYNWGCFQKPPEDNDSNSYENVLICKPSTPESGTEESEDYQNSVSILQWRESKRTMGARTSPSGSPDEEPDYVNGDVATTEKI.

Over 1–7 (MNAELEL) the chain is Extracellular. The chain crosses the membrane as a helical; Signal-anchor for type III membrane protein span at residues 8-28 (LWPLSGLLLLLLLGTTAWLCV). 2 S-palmitoyl cysteine lipidation sites follow: Cys-27 and Cys-30. The Cytoplasmic segment spans residues 29–204 (QCSRPGVKRN…NGDVATTEKI (176 aa)). Position 60 is a phosphotyrosine (Tyr-60). A phosphoserine mark is found at Ser-61 and Ser-96. Residues Tyr-140, Tyr-161, and Tyr-193 each carry the phosphotyrosine modification. Residues 147-204 (KPSTPESGTEESEDYQNSVSILQWRESKRTMGARTSPSGSPDEEPDYVNGDVATTEKI) are disordered.

When phosphorylated, interacts with GRB2. May also interact with SOS1, GAB1 and CBL. Post-translationally, phosphorylated on tyrosines following cross-linking of BCR in B-cells, high affinity IgG receptor (FCGR1) in myeloid cells, or high affinity IgE receptor (FCER1) in mast cells; which induces the recruitment of GRB2.

It localises to the cell membrane. Involved in FCER1 (high affinity immunoglobulin epsilon receptor)-mediated signaling in mast cells. May also be involved in BCR (B-cell antigen receptor)-mediated signaling in B-cells and FCGR1 (high affinity immunoglobulin gamma Fc receptor I)-mediated signaling in myeloid cells. Couples activation of these receptors and their associated kinases with distal intracellular events through the recruitment of GRB2. The sequence is that of Linker for activation of T-cells family member 2 (Lat2) from Rattus norvegicus (Rat).